The following is a 97-amino-acid chain: Carboxypeptidase inhibitor (97 aa).

The N-terminal stretch at Met-1 to Ala-22 is a signal peptide.

The protein localises to the secreted. Its function is as follows. Potent competitive inhibitor of metallo-carboxypeptidases CPA1, CPA2, CPB, CPN, and TAF1a. Also inhibits human CPA4. Accelerates fibrinolysis in vitro and may contribute to the maintenance of host blood liquidity during feeding. The polypeptide is Carboxypeptidase inhibitor (Rhipicephalus bursa (Tick)).